The sequence spans 259 residues: Sugar fermentation stimulation protein homolog (259 aa).

It belongs to the SfsA family.

The polypeptide is Sugar fermentation stimulation protein homolog (Chloroflexus aurantiacus (strain ATCC 29364 / DSM 637 / Y-400-fl)).